Here is a 365-residue protein sequence, read N- to C-terminus: Cobalt-precorrin-5B C(1)-methyltransferase (365 aa).

It belongs to the CbiD family.

The enzyme catalyses Co-precorrin-5B + S-adenosyl-L-methionine = Co-precorrin-6A + S-adenosyl-L-homocysteine. The protein operates within cofactor biosynthesis; adenosylcobalamin biosynthesis; cob(II)yrinate a,c-diamide from sirohydrochlorin (anaerobic route): step 6/10. Its function is as follows. Catalyzes the methylation of C-1 in cobalt-precorrin-5B to form cobalt-precorrin-6A. The chain is Cobalt-precorrin-5B C(1)-methyltransferase from Paraburkholderia phytofirmans (strain DSM 17436 / LMG 22146 / PsJN) (Burkholderia phytofirmans).